The chain runs to 352 residues: Protein RecA (352 aa).

Residue 67 to 74 (GPESSGKT) coordinates ATP.

The protein belongs to the RecA family.

It localises to the cytoplasm. Can catalyze the hydrolysis of ATP in the presence of single-stranded DNA, the ATP-dependent uptake of single-stranded DNA by duplex DNA, and the ATP-dependent hybridization of homologous single-stranded DNAs. It interacts with LexA causing its activation and leading to its autocatalytic cleavage. This Chlamydia trachomatis serovar A (strain ATCC VR-571B / DSM 19440 / HAR-13) protein is Protein RecA.